The chain runs to 34 residues: Potassium channel toxin alpha-KTx 6 hetlaxin (34 aa).

Cystine bridges form between cysteine 3-cysteine 24, cysteine 9-cysteine 29, cysteine 13-cysteine 31, and cysteine 19-cysteine 34. Cysteine 34 carries the cysteine amide modification.

Post-translationally, contains 4 disulfide bonds. In terms of tissue distribution, expressed by the venom gland.

The protein localises to the secreted. Its function is as follows. Binds to voltage-gated potassium channels Kv1.3/KCNA3 (IC(50)=0.48 uM) and Kv1.1/KCNA1 (IC(50)=6.7 uM) and inhibits channel activity. The sequence is that of Potassium channel toxin alpha-KTx 6 hetlaxin from Heterometrus laoticus (Thai giant scorpion).